A 453-amino-acid polypeptide reads, in one-letter code: Ribosomal protein uS12 methylthiotransferase RimO (453 aa).

One can recognise an MTTase N-terminal domain in the interval 5-120 (PKVGFVSLGC…VMQAVHSHLP (116 aa)). [4Fe-4S] cluster contacts are provided by C14, C50, C79, C151, C155, and C158. A Radical SAM core domain is found at 137-383 (LTPRHYAYLK…EVAEEVSAHR (247 aa)). One can recognise a TRAM domain in the interval 385–453 (QRKVGKTLKV…ADGHDLWGEV (69 aa)).

This sequence belongs to the methylthiotransferase family. RimO subfamily. Requires [4Fe-4S] cluster as cofactor.

Its subcellular location is the cytoplasm. It catalyses the reaction L-aspartate(89)-[ribosomal protein uS12]-hydrogen + (sulfur carrier)-SH + AH2 + 2 S-adenosyl-L-methionine = 3-methylsulfanyl-L-aspartate(89)-[ribosomal protein uS12]-hydrogen + (sulfur carrier)-H + 5'-deoxyadenosine + L-methionine + A + S-adenosyl-L-homocysteine + 2 H(+). Catalyzes the methylthiolation of an aspartic acid residue of ribosomal protein uS12. The protein is Ribosomal protein uS12 methylthiotransferase RimO of Burkholderia cenocepacia (strain ATCC BAA-245 / DSM 16553 / LMG 16656 / NCTC 13227 / J2315 / CF5610) (Burkholderia cepacia (strain J2315)).